Reading from the N-terminus, the 431-residue chain is Histidinol dehydrogenase (431 aa).

NAD(+) contacts are provided by tyrosine 130, glutamine 192, and asparagine 215. 3 residues coordinate substrate: serine 238, glutamine 260, and histidine 263. Glutamine 260 and histidine 263 together coordinate Zn(2+). Catalysis depends on proton acceptor residues glutamate 328 and histidine 329. Residues histidine 329, aspartate 362, glutamate 416, and histidine 421 each coordinate substrate. Residue aspartate 362 participates in Zn(2+) binding. Histidine 421 is a binding site for Zn(2+).

Belongs to the histidinol dehydrogenase family. Zn(2+) serves as cofactor.

It carries out the reaction L-histidinol + 2 NAD(+) + H2O = L-histidine + 2 NADH + 3 H(+). It functions in the pathway amino-acid biosynthesis; L-histidine biosynthesis; L-histidine from 5-phospho-alpha-D-ribose 1-diphosphate: step 9/9. Catalyzes the sequential NAD-dependent oxidations of L-histidinol to L-histidinaldehyde and then to L-histidine. In Thermosynechococcus vestitus (strain NIES-2133 / IAM M-273 / BP-1), this protein is Histidinol dehydrogenase.